The sequence spans 470 residues: Probable tocopherol cyclase, chloroplastic (470 aa).

Residues Met-1–Arg-61 constitute a chloroplast transit peptide. The tract at residues Arg-14–Ala-48 is disordered. Residues Cys-22–Leu-31 show a composition bias toward basic residues. Low complexity predominate over residues Ala-32 to Ala-48.

As to expression, expressed in the roots, stems, leaves and spikelets.

The protein localises to the plastid. It is found in the chloroplast. Its subcellular location is the plastoglobule. It functions in the pathway cofactor biosynthesis; tocopherol biosynthesis. Functionally, involved in the synthesis of both tocopherols and tocotrienols (vitamin E), which presumably protect photosynthetic complexes from oxidative stress. Catalyzes the conversion of 2-methyl-6-phytyl-1,4-hydroquinone and 2,3-dimethyl-5-phytyl-1,4-hydroquinone (DMPQ) to delta- and gamma-tocopherol respectively. Also converts 2,3-dimethyl-5-geranylgeranyl-1,4-hydroquinone (DMGQ) to gamma-tocotrienol. This chain is Probable tocopherol cyclase, chloroplastic (VTE1), found in Oryza sativa subsp. japonica (Rice).